The following is a 99-amino-acid chain: SAGA-associated factor 11 (99 aa).

Residues 71–92 (IHCENCGRDVSANRLAAHLQRC) form an SGF11-type zinc finger.

Belongs to the SGF11 family. In terms of assembly, component of the 1.8 MDa SAGA transcription coactivator-HAT complex. SAGA is built of 5 distinct domains with specialized functions. Within the SAGA complex, SUS1, SGF11, SGF73 and UBP8 form an additional subcomplex of SAGA called the DUB module (deubiquitination module). Interacts directly with SGF73, SUS1 and UBP8.

It localises to the nucleus. Functionally, functions as a component of the transcription regulatory histone acetylation (HAT) complex SAGA. At the promoters, SAGA is required for recruitment of the basal transcription machinery. It influences RNA polymerase II transcriptional activity through different activities such as TBP interaction and promoter selectivity, interaction with transcription activators, and chromatin modification through histone acetylation and deubiquitination. SAGA acetylates nucleosomal histone H3 to some extent (to form H3K9ac, H3K14ac, H3K18ac and H3K23ac). SAGA interacts with DNA via upstream activating sequences (UASs). Involved in transcriptional regulation of a subset of SAGA-regulated genes. Within the SAGA complex, participates in a subcomplex, that specifically deubiquitinates histones H2B. The polypeptide is SAGA-associated factor 11 (Saccharomyces cerevisiae (strain YJM789) (Baker's yeast)).